The primary structure comprises 233 residues: Ubiquitin carboxyl-terminal hydrolase isozyme L4 (233 aa).

The UCH catalytic domain occupies Arg5 to Ala232. The tract at residues Pro8 to Pro13 is interaction with ubiquitin. Residue Cys95 is the Nucleophile of the active site. Ser133 carries the phosphoserine modification. Catalysis depends on His172, which acts as the Proton donor. The interaction with ubiquitin stretch occupies residues Glu222–Ala227.

It belongs to the peptidase C12 family. As to expression, expressed in various tissues at low level.

It localises to the cytoplasm. The catalysed reaction is Thiol-dependent hydrolysis of ester, thioester, amide, peptide and isopeptide bonds formed by the C-terminal Gly of ubiquitin (a 76-residue protein attached to proteins as an intracellular targeting signal).. Its function is as follows. Ubiquitin-protein hydrolase is involved both in the processing of ubiquitin precursors and of ubiquitinated proteins. This enzyme is a thiol protease that recognizes and hydrolyzes a peptide bond at the C-terminal glycine of ubiquitin. In Mus musculus (Mouse), this protein is Ubiquitin carboxyl-terminal hydrolase isozyme L4 (Uchl4).